A 298-amino-acid chain; its full sequence is MPWIQLQIPADPDTADQLEDLLMEMGADAVSMEDAADQPLYEPDPGTTPLWSQTTVTGLFQSDRNIEQLLADIRDAWHQQTQQSLADIDVTLVEDKDWERAWMDDFHPLQFGERLWIVPSWHEAPDPDAANLLLDPGLAFGTGTHPTTALCLEWLDGQDVAGKQVTDYGCGSGILGLAALLLGADHVVGVDTDPQALEASRDNARRNGVEDSRLDLYLPGQDPDTRADIMLANILAQPLIGLAPRLAELTRPGGHLVLSGILFNQAREVMDAYEPWFVMDEPEQKEDWIRLTGRRKDG.

The S-adenosyl-L-methionine site is built by T148, G169, D191, and N233.

It belongs to the methyltransferase superfamily. PrmA family.

It is found in the cytoplasm. The catalysed reaction is L-lysyl-[protein] + 3 S-adenosyl-L-methionine = N(6),N(6),N(6)-trimethyl-L-lysyl-[protein] + 3 S-adenosyl-L-homocysteine + 3 H(+). Methylates ribosomal protein L11. The protein is Ribosomal protein L11 methyltransferase of Marinobacter nauticus (strain ATCC 700491 / DSM 11845 / VT8) (Marinobacter aquaeolei).